The following is a 327-amino-acid chain: Mitochondrial thiamine pyrophosphate carrier 1 (327 aa).

Solcar repeat units follow at residues 13–114 (GSKL…AAQL), 126–214 (PAAA…LRAP), and 222–317 (FWGG…VLRA). A run of 6 helical transmembrane segments spans residues 16 to 36 (LQVV…IAPL), 95 to 111 (LLYI…YRSA), 132 to 152 (FVAG…LDLL), 189 to 209 (GIGP…AAYE), 223 to 245 (WGGQ…VFPL), and 292 to 309 (GLTV…VTMW).

It belongs to the mitochondrial carrier (TC 2.A.29) family.

It is found in the mitochondrion inner membrane. In terms of biological role, mitochondrial transporter that mediates uptake of thiamine pyrophosphate (ThPP) into mitochondria. The chain is Mitochondrial thiamine pyrophosphate carrier 1 (TPC1) from Pyricularia oryzae (strain 70-15 / ATCC MYA-4617 / FGSC 8958) (Rice blast fungus).